The chain runs to 377 residues: UPF0754 membrane protein RBAM_010020 (377 aa).

Helical transmembrane passes span 1-21 and 357-377; these read MGIAGTFLFMIVIGAAIGAVT and YLGGLLGGIIGAIQALFVILF.

Belongs to the UPF0754 family.

It localises to the cell membrane. The polypeptide is UPF0754 membrane protein RBAM_010020 (Bacillus velezensis (strain DSM 23117 / BGSC 10A6 / LMG 26770 / FZB42) (Bacillus amyloliquefaciens subsp. plantarum)).